A 57-amino-acid polypeptide reads, in one-letter code: Phylloseptin-Az4 (57 aa).

The N-terminal stretch at 1-13 (LVLFLGLVSLSIC) is a signal peptide. A propeptide spanning residues 14–35 (EEEKRETEEEENDQEEDDKSEE) is cleaved from the precursor. Residues 16-35 (EKRETEEEENDQEEDDKSEE) form a disordered region. Acidic residues predominate over residues 21 to 32 (EEEENDQEEDDK). Leu-56 is modified (leucine amide).

As to expression, expressed by the skin glands.

Its subcellular location is the secreted. Its function is as follows. Has antibacterial activity against the Gram-positive bacterium M.luteus ATCC 49732 (MIC=1.3 uM). Does not inhibit the growth of the fungus C.albicans. The protein is Phylloseptin-Az4 (psn12) of Pithecopus azureus (Orange-legged monkey tree frog).